Consider the following 60-residue polypeptide: Potassium channel toxin alpha-KTx 15.8 (60 aa).

Residues Met1–Cys22 form the signal peptide. Gln23 bears the Pyrrolidone carboxylic acid mark. Disulfide bonds link Cys30-Cys50, Cys35-Cys55, and Cys39-Cys57.

It belongs to the short scorpion toxin superfamily. Potassium channel inhibitor family. Alpha-KTx 15 subfamily. As to expression, expressed by the venom gland.

The protein localises to the secreted. Functionally, blocker of A-type voltage-gated potassium channels of cerebellar granular cells. May also inhibit Kv4/KCND when coexpressed with DPP6 or DPP10. The occlusion of the outer entry of the K(+) conducting pore is partially reversible and affects both open and closed channels. It shares the same target in rat brain than BmTX3 (AC Q8I0L5) and AmmTX3 (AC P60208). Also shows a weak inhibition on Kv1.2/KCNA2 and Kv1.3/KCNA3 voltage-gated potassium channels. The sequence is that of Potassium channel toxin alpha-KTx 15.8 from Olivierus martensii (Manchurian scorpion).